Reading from the N-terminus, the 167-residue chain is Probable chemoreceptor glutamine deamidase CheD (167 aa).

The protein belongs to the CheD family.

The enzyme catalyses L-glutaminyl-[protein] + H2O = L-glutamyl-[protein] + NH4(+). In terms of biological role, probably deamidates glutamine residues to glutamate on methyl-accepting chemotaxis receptors (MCPs), playing an important role in chemotaxis. This chain is Probable chemoreceptor glutamine deamidase CheD, found in Natronomonas pharaonis (strain ATCC 35678 / DSM 2160 / CIP 103997 / JCM 8858 / NBRC 14720 / NCIMB 2260 / Gabara) (Halobacterium pharaonis).